The sequence spans 373 residues: Quinolinate synthase (373 aa).

Iminosuccinate contacts are provided by H46 and S63. Residue C109 participates in [4Fe-4S] cluster binding. Iminosuccinate-binding positions include 142-144 (YMN) and S163. C232 contributes to the [4Fe-4S] cluster binding site. Iminosuccinate contacts are provided by residues 258-260 (HPE) and T275. C324 is a [4Fe-4S] cluster binding site.

The protein belongs to the quinolinate synthase family. Type 3 subfamily. The cofactor is [4Fe-4S] cluster.

The protein resides in the cytoplasm. The catalysed reaction is iminosuccinate + dihydroxyacetone phosphate = quinolinate + phosphate + 2 H2O + H(+). The protein operates within cofactor biosynthesis; NAD(+) biosynthesis; quinolinate from iminoaspartate: step 1/1. Its function is as follows. Catalyzes the condensation of iminoaspartate with dihydroxyacetone phosphate to form quinolinate. This Acidobacterium capsulatum (strain ATCC 51196 / DSM 11244 / BCRC 80197 / JCM 7670 / NBRC 15755 / NCIMB 13165 / 161) protein is Quinolinate synthase.